The sequence spans 1821 residues: PH-interacting protein (1821 aa).

The residue at position 136 (S136) is a Phosphoserine. 5 WD repeats span residues 181–222, 224–262, 265–310, 319–360, and 363–402; these read GHLS…ATLR, HAAEISDMAVNYENTMIAAGSCDKMIRVWCLRTCAPLAV, GHSA…INPR, RPGV…KISE, and FHTDKVDSIQFSNTSNRFVSGSRDGTARIWQFKRREWKSI. Residue K421 forms a Glycyl lysine isopeptide (Lys-Gly) (interchain with G-Cter in SUMO2) linkage. 3 WD repeats span residues 422–461, 464–504, and 512–551; these read ITKMKVTMVAWDRHDNTVITAVNNMTLKVWNSYTGQLIHV, GHED…KVRS, and QGHGAVFDCKCSPDGQHFACTDSHGHLLIFGFGSSSKYDK. S641, S659, S674, S677, S683, and S692 each carry phosphoserine. Disordered regions lie at residues 653 to 695 and 782 to 927; these read EQDL…SGQI and DLGD…RLAV. Residues 665–681 show a composition bias toward polar residues; sequence SNASRVNRGSVSSTSEV. A compositionally biased stretch (basic and acidic residues) spans 800-810; that stretch reads SALEETPRPLE. Low complexity predominate over residues 841 to 854; it reads SDGSSSDYSSDYSD. Phosphoserine is present on residues S879, S880, S881, and S911. Over residues 912-924 the composition is skewed to basic residues; the sequence is PKKKKPKERKQKR. The segment at 924–1129 is mediates interaction with IRS1; that stretch reads RLAVGELTEN…MELIPNNAVF (206 aa). Residues 1156 to 1263 form the Bromo 1 domain; it reads WGANPRDEEC…DLLLHFIKDQ (108 aa). Phosphoserine occurs at positions 1281, 1283, and 1296. The segment at 1282–1310 is disordered; the sequence is DSEEEEKDADVPGTSTRKRKDHQPRRRLR. The span at 1297–1310 shows a compositional bias: basic residues; sequence TRKRKDHQPRRRLR. Phosphoserine is present on S1315. One can recognise a Bromo 2 domain in the interval 1316–1421; sequence YDIQAWKKQC…AFFEEHISSV (106 aa). T1359 is subject to Phosphothreonine. At S1405 the chain carries Phosphoserine. A compositionally biased stretch (basic residues) spans 1435 to 1446; the sequence is NTISKKRKKRNR. A disordered region spans residues 1435–1507; it reads NTISKKRKKR…PESSSVVRTR (73 aa). Over residues 1447–1457 the composition is skewed to low complexity; it reads SSSLSSSAASS. A Glycyl lysine isopeptide (Lys-Gly) (interchain with G-Cter in SUMO1); alternate cross-link involves residue K1470. K1470 participates in a covalent cross-link: Glycyl lysine isopeptide (Lys-Gly) (interchain with G-Cter in SUMO2); alternate. The segment covering 1471-1482 has biased composition (polar residues); the sequence is SEVSTSPFSIPT. S1479 carries the post-translational modification Phosphoserine. N6-acetyllysine is present on K1497. A Phosphoserine modification is found at S1525. The residue at position 1533 (K1533) is an N6-acetyllysine. The span at 1556-1576 shows a compositional bias: polar residues; sequence STLSSPDPLTFSHATKNNSAK. Disordered regions lie at residues 1556–1596, 1623–1676, and 1740–1785; these read STLS…VFSK, QVNG…NSEQ, and RSNR…DSEE. Phosphoserine is present on S1560. K1644 participates in a covalent cross-link: Glycyl lysine isopeptide (Lys-Gly) (interchain with G-Cter in SUMO2). Phosphoserine is present on S1651. K1670 is covalently cross-linked (Glycyl lysine isopeptide (Lys-Gly) (interchain with G-Cter in SUMO2)). 2 positions are modified to phosphoserine: S1762 and S1783.

In terms of assembly, interacts (via bromo domain) with acetylated lysine residues on histone H1.4, histone H3 and H4 (in vitro). Interacts with IRS1 and IRS2. Widely expressed with most abundant expression detected in pancreatic islets, brain and skeletal muscle. Predominantly expressed in developing and regenerating neurons. Expressed in adult brain (granular layer of the olfactorium bulb, hippocampus, dentate gyrus and cerebellum internal granular layer). Expressed in the CA3 region of adult hippocampus, adult and fetal retina, perinatal dorsal root ganglion and embryonal olfactory epithelia (at protein level).

It localises to the nucleus. Functionally, probable regulator of the insulin and insulin-like growth factor signaling pathways. Stimulates cell proliferation through regulation of cyclin transcription and has an anti-apoptotic activity through AKT1 phosphorylation and activation. Plays a role in the regulation of cell morphology and cytoskeletal organization. In Mus musculus (Mouse), this protein is PH-interacting protein (Phip).